The following is a 216-amino-acid chain: Phosphorylated carbohydrates phosphatase TM_1254 (216 aa).

Asp7 (nucleophile) is an active-site residue.

It belongs to the HAD-like hydrolase superfamily. Requires Co(2+) as cofactor. Mg(2+) serves as cofactor. It depends on Mn(2+) as a cofactor. The cofactor is Ni(2+).

Functionally, displays high phosphatase activity toward erythrose 4-phosphate, fructose 6-phosphate, 2-deoxyglucose 6-phosphate, and mannose 6-phosphate. May have a role in the intracellular metabolism of many phosphorylated carbohydrates. The protein is Phosphorylated carbohydrates phosphatase TM_1254 of Thermotoga maritima (strain ATCC 43589 / DSM 3109 / JCM 10099 / NBRC 100826 / MSB8).